The primary structure comprises 327 residues: 2-keto-3-deoxygluconate permease (327 aa).

The next 10 helical transmembrane spans lie at Ile10–Pro30, Gly42–Ile62, Lys73–Ser93, Ile95–Val115, Ala139–Gly159, Ile163–Ala183, Val199–Ile219, Leu224–Ala244, Thr254–Ala274, and Ser289–Trp309.

The protein belongs to the KdgT transporter family.

It localises to the cell inner membrane. The enzyme catalyses 2-dehydro-3-deoxy-D-gluconate(in) + H(+)(in) = 2-dehydro-3-deoxy-D-gluconate(out) + H(+)(out). Catalyzes the proton-dependent uptake of 2-keto-3-deoxygluconate (KDG) into the cell. This is 2-keto-3-deoxygluconate permease from Escherichia coli O127:H6 (strain E2348/69 / EPEC).